A 313-amino-acid polypeptide reads, in one-letter code: ADP-L-glycero-D-manno-heptose-6-epimerase (313 aa).

Residues 10–11, 31–32, Lys-38, Lys-53, 75–79, and Asn-92 each bind NADP(+); these read MI, DN, and EGACS. Residue Tyr-139 is the Proton acceptor of the active site. An NADP(+)-binding site is contributed by Lys-143. Asn-174 contacts substrate. 2 residues coordinate NADP(+): Val-175 and Lys-183. Residue Lys-183 is the Proton acceptor of the active site. Substrate is bound by residues Ser-185, His-192, 206–209, Arg-214, and Tyr-277; that span reads FEGS.

The protein belongs to the NAD(P)-dependent epimerase/dehydratase family. HldD subfamily. In terms of assembly, homopentamer. Requires NADP(+) as cofactor.

The catalysed reaction is ADP-D-glycero-beta-D-manno-heptose = ADP-L-glycero-beta-D-manno-heptose. It participates in nucleotide-sugar biosynthesis; ADP-L-glycero-beta-D-manno-heptose biosynthesis; ADP-L-glycero-beta-D-manno-heptose from D-glycero-beta-D-manno-heptose 7-phosphate: step 4/4. Its function is as follows. Catalyzes the interconversion between ADP-D-glycero-beta-D-manno-heptose and ADP-L-glycero-beta-D-manno-heptose via an epimerization at carbon 6 of the heptose. The sequence is that of ADP-L-glycero-D-manno-heptose-6-epimerase from Aliivibrio fischeri (strain ATCC 700601 / ES114) (Vibrio fischeri).